A 154-amino-acid chain; its full sequence is MPNTDVSSLSMLGHQTETASSPEEAVLEKVPSNHAGTDYVVRFTAPEFTSLCPMTGQPDFAHIVIDYIPGEWLVESKSLKLFLHSFRNHGAFHEDCSIYIAKRIVELLDPKWLRIGAYWYPRGGIPIDVFWQTGKPPEGVWLPEQGVATYRGRG.

Polar residues predominate over residues 1-21; sequence MPNTDVSSLSMLGHQTETASS. The segment at 1–26 is disordered; that stretch reads MPNTDVSSLSMLGHQTETASSPEEAV. C52 (thioimide intermediate) is an active-site residue. The active-site Proton donor is D59. Substrate is bound by residues 74-76 and 93-94; these read VES and HE.

Belongs to the GTP cyclohydrolase I family. QueF type 1 subfamily.

The protein resides in the cytoplasm. It catalyses the reaction 7-aminomethyl-7-carbaguanine + 2 NADP(+) = 7-cyano-7-deazaguanine + 2 NADPH + 3 H(+). It participates in tRNA modification; tRNA-queuosine biosynthesis. Its function is as follows. Catalyzes the NADPH-dependent reduction of 7-cyano-7-deazaguanine (preQ0) to 7-aminomethyl-7-deazaguanine (preQ1). The chain is NADPH-dependent 7-cyano-7-deazaguanine reductase from Rhizobium etli (strain ATCC 51251 / DSM 11541 / JCM 21823 / NBRC 15573 / CFN 42).